Consider the following 413-residue polypeptide: Multifunctional CCA protein (413 aa).

2 residues coordinate ATP: glycine 8 and arginine 11. Residues glycine 8 and arginine 11 each contribute to the CTP site. Residues aspartate 21 and aspartate 23 each coordinate Mg(2+). 3 residues coordinate ATP: arginine 91, arginine 137, and arginine 140. The CTP site is built by arginine 91, arginine 137, and arginine 140. An HD domain is found at 228–329 (TGIHTLMTLS…VKLFDSIDAW (102 aa)).

It belongs to the tRNA nucleotidyltransferase/poly(A) polymerase family. Bacterial CCA-adding enzyme type 1 subfamily. Monomer. Can also form homodimers and oligomers. Mg(2+) serves as cofactor. Ni(2+) is required as a cofactor.

It catalyses the reaction a tRNA precursor + 2 CTP + ATP = a tRNA with a 3' CCA end + 3 diphosphate. The catalysed reaction is a tRNA with a 3' CCA end + 2 CTP + ATP = a tRNA with a 3' CCACCA end + 3 diphosphate. Its function is as follows. Catalyzes the addition and repair of the essential 3'-terminal CCA sequence in tRNAs without using a nucleic acid template. Adds these three nucleotides in the order of C, C, and A to the tRNA nucleotide-73, using CTP and ATP as substrates and producing inorganic pyrophosphate. tRNA 3'-terminal CCA addition is required both for tRNA processing and repair. Also involved in tRNA surveillance by mediating tandem CCA addition to generate a CCACCA at the 3' terminus of unstable tRNAs. While stable tRNAs receive only 3'-terminal CCA, unstable tRNAs are marked with CCACCA and rapidly degraded. The chain is Multifunctional CCA protein from Citrobacter koseri (strain ATCC BAA-895 / CDC 4225-83 / SGSC4696).